The chain runs to 102 residues: NADH-quinone oxidoreductase subunit K (102 aa).

Transmembrane regions (helical) follow at residues 5–25 (IAHY…GIFL), 31–51 (IIIL…FVAF), and 66–86 (FILT…VVFF).

The protein belongs to the complex I subunit 4L family. As to quaternary structure, NDH-1 is composed of 14 different subunits. Subunits NuoA, H, J, K, L, M, N constitute the membrane sector of the complex.

It is found in the cell inner membrane. It catalyses the reaction a quinone + NADH + 5 H(+)(in) = a quinol + NAD(+) + 4 H(+)(out). NDH-1 shuttles electrons from NADH, via FMN and iron-sulfur (Fe-S) centers, to quinones in the respiratory chain. The immediate electron acceptor for the enzyme in this species is believed to be ubiquinone. Couples the redox reaction to proton translocation (for every two electrons transferred, four hydrogen ions are translocated across the cytoplasmic membrane), and thus conserves the redox energy in a proton gradient. This Bartonella bacilliformis (strain ATCC 35685 / KC583 / Herrer 020/F12,63) protein is NADH-quinone oxidoreductase subunit K.